A 160-amino-acid chain; its full sequence is Nucleotide-binding protein PSHAa2277 (160 aa).

Belongs to the YajQ family.

In terms of biological role, nucleotide-binding protein. The protein is Nucleotide-binding protein PSHAa2277 of Pseudoalteromonas translucida (strain TAC 125).